Consider the following 165-residue polypeptide: Choriogonadotropin subunit beta 7 (165 aa).

The N-terminal stretch at 1–20 (MEMFQGLLLLLLLSMGGTWA) is a signal peptide. Intrachain disulfides connect Cys-29–Cys-77, Cys-43–Cys-92, Cys-46–Cys-130, Cys-54–Cys-108, Cys-58–Cys-110, and Cys-113–Cys-120. 2 N-linked (GlcNAc...) asparagine glycosylation sites follow: Asn-33 and Asn-50. The interval 131-165 (DDPRFQASSSSKAPPPSLPSPSRLPGPSDTPILPQ) is disordered. O-linked (GalNAc...) serine glycans are attached at residues Ser-141, Ser-147, Ser-152, and Ser-158. The segment covering 143 to 154 (APPPSLPSPSRL) has biased composition (pro residues).

Belongs to the glycoprotein hormones subunit beta family. In terms of assembly, heterodimer of a common alpha chain identical in LH, FSH, TSH and HCG and a unique beta chain distinct in each of the hormones and confers receptor and biological specificity. As to expression, high expression in the placenta throughout pregnancy.

The protein localises to the secreted. Functionally, beta subunit of the human chorionic gonadotropin (hCG). hCG is a complex glycoprotein composed of two glycosylated subunits alpha and beta which are non-covalently associated. The alpha subunit is identical to those in the pituitary gonadotropin hormones (LH, FSH and TSH). The beta subunits are distinct in each of the hormones and confer receptor and biological specificity. Has an essential role for pregnancy and maternal adaptation. Stimulates the ovaries to synthesize the steroids that are essential for the maintenance of pregnancy. In Homo sapiens (Human), this protein is Choriogonadotropin subunit beta 7.